The following is a 33-amino-acid chain: MSDIN-like toxin proprotein 5 (33 aa).

Residues 1 to 10 constitute a propeptide that is removed on maturation; that stretch reads MSDINATRLP. The segment at residues 11-18 is a cross-link (cyclopeptide (Ile-Pro)); it reads IFWFIYFP. Positions 19 to 32 are excised as a propeptide; that stretch reads CVGDNVDNTLTRGE.

This sequence belongs to the MSDIN fungal toxin family. Processed by the macrocyclase-peptidase enzyme POPB to yield a toxic cyclic octapeptide. POPB first removes 10 residues from the N-terminus. Conformational trapping of the remaining peptide forces the enzyme to release this intermediate rather than proceed to macrocyclization. The enzyme rebinds the remaining peptide in a different conformation and catalyzes macrocyclization of the N-terminal 8 residues.

Functionally, probable toxin that belongs to the MSDIN-like toxin family responsible for a large number of food poisoning cases and deaths. The polypeptide is MSDIN-like toxin proprotein 5 (Amanita phalloides (Death cap)).